A 306-amino-acid polypeptide reads, in one-letter code: D-aminoacyl-tRNA deacylase (306 aa).

It belongs to the DtdA deacylase family. In terms of assembly, monomer. Zn(2+) is required as a cofactor.

The catalysed reaction is a D-aminoacyl-tRNA + H2O = a tRNA + a D-alpha-amino acid + H(+). It carries out the reaction glycyl-tRNA(Ala) + H2O = tRNA(Ala) + glycine + H(+). D-aminoacyl-tRNA deacylase with broad substrate specificity. By recycling D-aminoacyl-tRNA to D-amino acids and free tRNA molecules, this enzyme counteracts the toxicity associated with the formation of D-aminoacyl-tRNA entities in vivo. This Methanosarcina barkeri (strain Fusaro / DSM 804) protein is D-aminoacyl-tRNA deacylase.